Consider the following 309-residue polypeptide: MVKVYAPASSANMSVGFDVLGAAVTPVDGSLLGDVVSVDAAESFTLNNLGRFADKLPSAPRENIVYQCWERFCQELGKQIPVAMTLEKNMPIGSGLGSSACSVVAALVAMNEFCGKPLNDTRLLAIMGELEGRISGSIHYDNVAPCFLGGMQLMIEENGIISQQVPGFDEWLWVLAYPGINVSTAEARAILPAQYRRQDCIAHGRHLAGFIHACYSRQPQLAAKLMKDVIAEPYRARLLPGFSQARQAVAEIGALASGISGSGPTLFALCDKPDTAQRVADWLGKNYLQNQEGFVHICQLDTAGARVLG.

P91–C101 is a binding site for ATP.

The protein belongs to the GHMP kinase family. Homoserine kinase subfamily.

It localises to the cytoplasm. It catalyses the reaction L-homoserine + ATP = O-phospho-L-homoserine + ADP + H(+). It functions in the pathway amino-acid biosynthesis; L-threonine biosynthesis; L-threonine from L-aspartate: step 4/5. Functionally, catalyzes the ATP-dependent phosphorylation of L-homoserine to L-homoserine phosphate. The polypeptide is Homoserine kinase (Citrobacter koseri (strain ATCC BAA-895 / CDC 4225-83 / SGSC4696)).